Consider the following 123-residue polypeptide: Secreted LysM effector Lys1 (123 aa).

The signal sequence occupies residues 1 to 20 (MMGLAKTLLLASQLTAVVVA). Residues 72-118 (KFCWVQAGNKCYQVAMENHISLADFLKWNPGAGSDCRTLWANTYACV) enclose the LysM domain.

Belongs to the secreted LysM effector family.

In terms of biological role, might have a role in sequestration of chitin oligosaccharides (breakdown products of fungal cell walls that are released during invasion and act as triggers of host immunity) to dampen host defense. The polypeptide is Secreted LysM effector Lys1 (Pochonia chlamydosporia (strain 123) (Metacordyceps chlamydosporia)).